A 228-amino-acid chain; its full sequence is Cytochrome c biogenesis ATP-binding export protein CcmA (228 aa).

Positions 2 to 227 constitute an ABC transporter domain; that stretch reads LSIERLGVGR…LHLERSGAWL (226 aa). ATP is bound at residue 34-41; that stretch reads GANGSGKT. Residues 106–126 are disordered; sequence GAPDGTSSVPASGRSGVAAPP.

It belongs to the ABC transporter superfamily. CcmA exporter (TC 3.A.1.107) family. The complex is composed of two ATP-binding proteins (CcmA) and two transmembrane proteins (CcmB).

It localises to the cell inner membrane. The enzyme catalyses heme b(in) + ATP + H2O = heme b(out) + ADP + phosphate + H(+). Part of the ABC transporter complex CcmAB involved in the biogenesis of c-type cytochromes; once thought to export heme, this seems not to be the case, but its exact role is uncertain. Responsible for energy coupling to the transport system. This is Cytochrome c biogenesis ATP-binding export protein CcmA from Paraburkholderia xenovorans (strain LB400).